The chain runs to 188 residues: Probable manganese efflux pump MntP (188 aa).

The next 5 membrane-spanning stretches (helical) occupy residues 3–23 (ITAT…ASIG), 66–86 (LEWN…RMII), 106–128 (WLLV…GLAF), 143–163 (ATLI…SIIG), and 168–188 (ILGG…HFHG).

This sequence belongs to the MntP (TC 9.B.29) family.

It is found in the cell inner membrane. Its function is as follows. Probably functions as a manganese efflux pump. This Escherichia coli O7:K1 (strain IAI39 / ExPEC) protein is Probable manganese efflux pump MntP.